The chain runs to 284 residues: Shikimate dehydrogenase (NADP(+)) (284 aa).

Residues 20-22 (SIS) and Ser-67 contribute to the shikimate site. The Proton acceptor role is filled by Lys-71. Asp-83 contributes to the NADP(+) binding site. Residues Asn-92 and Asp-107 each contribute to the shikimate site. NADP(+) is bound by residues 129 to 133 (GAGGA) and Ile-227. Tyr-229 is a binding site for shikimate. An NADP(+)-binding site is contributed by Gly-250.

The protein belongs to the shikimate dehydrogenase family. Homodimer.

The catalysed reaction is shikimate + NADP(+) = 3-dehydroshikimate + NADPH + H(+). It participates in metabolic intermediate biosynthesis; chorismate biosynthesis; chorismate from D-erythrose 4-phosphate and phosphoenolpyruvate: step 4/7. Its function is as follows. Involved in the biosynthesis of the chorismate, which leads to the biosynthesis of aromatic amino acids. Catalyzes the reversible NADPH linked reduction of 3-dehydroshikimate (DHSA) to yield shikimate (SA). The chain is Shikimate dehydrogenase (NADP(+)) from Streptococcus pneumoniae (strain JJA).